The primary structure comprises 107 residues: N(4)-acetylcytidine amidohydrolase (107 aa).

The ASCH domain occupies 9–105 (TFFEFLTPLI…KLFVIEYELI (97 aa)). Lys23 (proton acceptor) is an active-site residue. The active-site Nucleophile is the Thr26. Glu76 serves as the catalytic Proton donor.

It belongs to the N(4)-acetylcytidine amidohydrolase family.

The enzyme catalyses N(4)-acetylcytidine + H2O = cytidine + acetate + H(+). It catalyses the reaction N(4)-acetyl-2'-deoxycytidine + H2O = 2'-deoxycytidine + acetate + H(+). The catalysed reaction is N(4)-acetylcytosine + H2O = cytosine + acetate + H(+). Catalyzes the hydrolysis of N(4)-acetylcytidine (ac4C). In Vibrio parahaemolyticus serotype O3:K6 (strain RIMD 2210633), this protein is N(4)-acetylcytidine amidohydrolase.